A 331-amino-acid polypeptide reads, in one-letter code: Meiotic recombination protein P22 (331 aa).

The interval 132-187 is disordered; that stretch reads NNIQKEVHQRNSQRRSIQCTPKKRGRKPKQPAKKLQSRISTDQLGSTPSPSKLPAK. Residues 152-167 are compositionally biased toward basic residues; it reads PKKRGRKPKQPAKKLQ. Residues 168 to 181 are compositionally biased toward polar residues; it reads SRISTDQLGSTPSP.

Belongs to the TOP6B-like family.

It localises to the chromosome. In terms of biological role, required for formation of the mei-W68-mediated double-strand breaks (DSBs) that initiate meiotic recombination. The sequence is that of Meiotic recombination protein P22 from Drosophila melanogaster (Fruit fly).